Reading from the N-terminus, the 339-residue chain is Anthranilate phosphoribosyltransferase (339 aa).

5-phospho-alpha-D-ribose 1-diphosphate-binding positions include Gly81, 84 to 85 (GD), Ser89, 91 to 94 (NVST), 109 to 117 (KHGNRALSS), and Ala121. Gly81 serves as a coordination point for anthranilate. Ser93 serves as a coordination point for Mg(2+). Asn112 provides a ligand contact to anthranilate. Arg167 contributes to the anthranilate binding site. Asp226 and Glu227 together coordinate Mg(2+).

This sequence belongs to the anthranilate phosphoribosyltransferase family. Homodimer. It depends on Mg(2+) as a cofactor.

The catalysed reaction is N-(5-phospho-beta-D-ribosyl)anthranilate + diphosphate = 5-phospho-alpha-D-ribose 1-diphosphate + anthranilate. It functions in the pathway amino-acid biosynthesis; L-tryptophan biosynthesis; L-tryptophan from chorismate: step 2/5. Its function is as follows. Catalyzes the transfer of the phosphoribosyl group of 5-phosphorylribose-1-pyrophosphate (PRPP) to anthranilate to yield N-(5'-phosphoribosyl)-anthranilate (PRA). This Rhodopseudomonas palustris (strain BisB18) protein is Anthranilate phosphoribosyltransferase.